The chain runs to 348 residues: Small ribosomal subunit biogenesis GTPase RsgA (348 aa).

The CP-type G domain occupies 72–230 (RNQLSRPAIA…IADTPGFNQP (159 aa)). Residues 121–124 (TKAD) and 172–180 (GPSGVGKSS) contribute to the GTP site. Positions 255, 260, 262, and 268 each coordinate Zn(2+). Positions 305 to 322 (AKSDRQGQQRLEPLLDAK) are enriched in basic and acidic residues. The disordered stretch occupies residues 305–348 (AKSDRQGQQRLEPLLDAKKYRRRSRRQQHQHVNPMAEEVLDSEW). Basic residues predominate over residues 323 to 333 (KYRRRSRRQQH).

Belongs to the TRAFAC class YlqF/YawG GTPase family. RsgA subfamily. In terms of assembly, monomer. Associates with 30S ribosomal subunit, binds 16S rRNA. Requires Zn(2+) as cofactor.

The protein resides in the cytoplasm. Functionally, one of several proteins that assist in the late maturation steps of the functional core of the 30S ribosomal subunit. Helps release RbfA from mature subunits. May play a role in the assembly of ribosomal proteins into the subunit. Circularly permuted GTPase that catalyzes slow GTP hydrolysis, GTPase activity is stimulated by the 30S ribosomal subunit. In Thermosynechococcus vestitus (strain NIES-2133 / IAM M-273 / BP-1), this protein is Small ribosomal subunit biogenesis GTPase RsgA.